A 134-amino-acid polypeptide reads, in one-letter code: Histone H3.3-like type 1 (134 aa).

The tract at residues methionine 1–alanine 25 is disordered. Residues lysine 5 and lysine 10 each carry the N6-acetyllysine; alternate modification. An N6-methylated lysine; alternate mark is found at lysine 5 and lysine 10. Serine 11 is subject to Phosphoserine. Residues lysine 15 and lysine 24 each carry the N6-acetyllysine modification. An N6-methylated lysine mark is found at lysine 28 and lysine 37.

The protein belongs to the histone H3 family. As to quaternary structure, the nucleosome is a histone octamer containing two molecules each of H2A, H2B, H3 and H4 assembled in one H3-H4 heterotetramer and two H2A-H2B heterodimers. The octamer wraps approximately 147 bp of DNA. In terms of processing, acetylation is generally linked to gene activation. Methylation at Lys-5 is linked to gene activation. Methylation at Lys-10 is linked to gene repression.

It localises to the nucleus. Its subcellular location is the chromosome. In terms of biological role, putative variant histone H3 which may replace conventional H3 in a subset of nucleosomes. Nucleosomes wrap and compact DNA into chromatin, limiting DNA accessibility to the cellular machineries which require DNA as a template. Histones thereby play a central role in transcription regulation, DNA repair, DNA replication and chromosomal stability. DNA accessibility is regulated via a complex set of post-translational modifications of histones, also called histone code, and nucleosome remodeling. The chain is Histone H3.3-like type 1 (his-70) from Caenorhabditis elegans.